A 568-amino-acid chain; its full sequence is Potassium-transporting ATPase potassium-binding subunit (568 aa).

10 helical membrane-spanning segments follow: residues 7–27 (AEIAFILGLTVALGWPLGLFL), 65–85 (SYALALLAFSAASFILLYAIL), 135–155 (AGLTSHNFLSAAAGIAVAAAV), 177–197 (VSLYLLLPLSIVIALVFVALG), 254–274 (LTNLIEIVEMNVLGFACVVAF), 286–306 (ALITVMAIFVAVAASVIYWTE), 383–403 (GLYGMIVLALIAVFVAGLMVG), 422–442 (MLAVLILPLAILGFSAAAAVL), 489–509 (LGIAMLLGRFGYVIPVLAIAG), and 530–550 (LFIGLLIGVILILGGLQFFPA).

Belongs to the KdpA family. The system is composed of three essential subunits: KdpA, KdpB and KdpC.

The protein localises to the cell inner membrane. Its function is as follows. Part of the high-affinity ATP-driven potassium transport (or Kdp) system, which catalyzes the hydrolysis of ATP coupled with the electrogenic transport of potassium into the cytoplasm. This subunit binds the periplasmic potassium ions and delivers the ions to the membrane domain of KdpB through an intramembrane tunnel. This is Potassium-transporting ATPase potassium-binding subunit from Beijerinckia indica subsp. indica (strain ATCC 9039 / DSM 1715 / NCIMB 8712).